The following is a 27-amino-acid chain: Conotoxin (27 aa).

Disulfide bonds link cysteine 2-cysteine 16, cysteine 6-cysteine 18, and cysteine 12-cysteine 23. Asparagine 27 carries the post-translational modification Asparagine amide.

Expressed by the venom duct.

The protein localises to the secreted. Functionally, probable neurotoxin that inhibits ion channels. This Conus amadis (Amadis cone) protein is Conotoxin.